The sequence spans 378 residues: Histone deacetylase 8 (378 aa).

Residues 15–325 (RSVVYVYSPE…WTYLTGTVLG (311 aa)) are histone deacetylase. D102 lines the substrate pocket. The active-site Proton acceptor is H144. Position 152 (G152) interacts with substrate. A divalent metal cation is bound by residues D179, H181, and D268. Y307 provides a ligand contact to substrate.

Belongs to the histone deacetylase family. HD type 1 subfamily. Requires a divalent metal cation as cofactor.

It is found in the nucleus. It localises to the chromosome. The protein resides in the cytoplasm. The catalysed reaction is N(6)-acetyl-L-lysyl-[histone] + H2O = L-lysyl-[histone] + acetate. It carries out the reaction N(6)-acetyl-L-lysyl-[protein] + H2O = L-lysyl-[protein] + acetate. The enzyme catalyses N(6)-(2E)-butenoyl-L-lysyl-[protein] + H2O = (2E)-2-butenoate + L-lysyl-[protein]. With respect to regulation, its activity is inhibited by trichostatin A (TSA) and butyrate, 2 well known histone deacetylase inhibitors. Histone deacetylase that catalyzes the deacetylation of lysine residues on the N-terminal part of the core histones (H2A, H2B, H3 and H4). Histone deacetylation gives a tag for epigenetic repression and plays an important role in transcriptional regulation, cell cycle progression and developmental events. Histone deacetylases act via the formation of large multiprotein complexes. Also involved in the deacetylation of non-histone proteins. In addition to protein deacetylase activity, also has protein-lysine deacylase activity: acts as a protein decrotonylase by mediating decrotonylation ((2E)-butenoyl) of histones. The chain is Histone deacetylase 8 (hdac8) from Danio rerio (Zebrafish).